The sequence spans 41 residues: uncharacterized protein (41 aa).

A helical membrane pass occupies residues 8–28 (IKKIAMFFLGILVGVFIVLFF).

The protein resides in the membrane. This is an uncharacterized protein from Streptococcus pneumoniae serotype 2 (strain D39 / NCTC 7466).